A 119-amino-acid polypeptide reads, in one-letter code: Large ribosomal subunit protein bL20c (119 aa).

It belongs to the bacterial ribosomal protein bL20 family.

The protein localises to the plastid. Its subcellular location is the chloroplast. Binds directly to 23S ribosomal RNA and is necessary for the in vitro assembly process of the 50S ribosomal subunit. It is not involved in the protein synthesizing functions of that subunit. The chain is Large ribosomal subunit protein bL20c from Brachypodium distachyon (Purple false brome).